Reading from the N-terminus, the 509-residue chain is uncharacterized protein (509 aa).

Residues 1–32 form the signal peptide; that stretch reads MMLPKRNIIHFLRKRAIFIVAAFIALLTVDYS.

The protein localises to the endoplasmic reticulum. This is an uncharacterized protein from Schizosaccharomyces pombe (strain 972 / ATCC 24843) (Fission yeast).